A 644-amino-acid chain; its full sequence is MTYDDIKAKVGELLKTIISEMLEKEGKTWEGEILFDETPNMEFGDFATTVAFLLAKVFKKAPRIIAQEIASNLEDKLPEYIAKVEVAGAGYINFFLDYEKFSKLTVKEILQKGEHFGESKIGEGKKVIVEHTSVNPTKPLHMGHARNAVLGDTVARIMRALGYNVEVQNYIDDLGVQFAQVLWGYLNMREEFESIIKELKEKGLSKEDILDHALGLLYVEVHKKMEEYPEVEREIRSIMKELEKEDNEISEKGRKLAEDVVKAQMKTTYRLSISYDLLSWESDIVRSGIFEESYKRIQENSHFEWAQEGKYKGAFIMKLGDLFPDLENPDTVLIRSDGTATYTGKDIAYHLWKFGKVSADMRYKVWDKINDHKTWTTAKDGERMPGRFANAEIVINVVGSEQRYEQMAVAYALKLLGYEEEYHNFHHLAYEHVVRPEGKFSGRKGTWIGFTVDEVLDEAVKRAKELVEEKNPSLSGEEKEKIAEIVGVGAVRYNLVKYSPEKIITFRWEDVLNFEGESAPYIQYAHARCASILKKAMEEGINIDKDALLKNADFSKLDNKEKELIKIISKFPEIVKTAGRDIKPHLLATYANELAMVFNSFYMALPVLKAEEGVRELRLLLVIATKQVLKNTLGLMGIEAPEVM.

Positions 134–144 (VNPTKPLHMGH) match the 'HIGH' region motif.

Belongs to the class-I aminoacyl-tRNA synthetase family.

It localises to the cytoplasm. It catalyses the reaction tRNA(Arg) + L-arginine + ATP = L-arginyl-tRNA(Arg) + AMP + diphosphate. In Thermococcus sibiricus (strain DSM 12597 / MM 739), this protein is Arginine--tRNA ligase.